The sequence spans 863 residues: Neuroligin-1 (863 aa).

The signal sequence occupies residues 1–45 (MALPRCTWPNYVWRAVMACLVHRGLGAPLTLCMLGCLLQAGHVLS). Over 46 to 717 (QKLDDVDPLV…DQRDYSTELS (672 aa)) the chain is Extracellular. An N-linked (GlcNAc...) (complex) asparagine glycan is attached at Asn-109. Cys-117 and Cys-153 are oxidised to a cystine. Residues 183–212 (KGGPLTKKQTDDLGDNDGAEDEDIRDSGGP) are disordered. Over residues 194–206 (DLGDNDGAEDEDI) the composition is skewed to acidic residues. N-linked (GlcNAc...) (complex) asparagine glycosylation is found at Asn-323 and Asn-363. 2 disulfide bridges follow: Cys-362–Cys-373 and Cys-532–Cys-566. Asn-567 carries an N-linked (GlcNAc...) asparagine glycan. The disordered stretch occupies residues 670-708 (PSTDITFRPTRKNSVPVTSAFPTAKQDDPKQQPSPFSVD). Polar residues predominate over residues 681-690 (KNSVPVTSAF). O-linked (GalNAc...) serine glycans are attached at residues Ser-703 and Ser-706. A helical transmembrane segment spans residues 718-738 (VTIAVGASLLFLNILAFAALY). The Cytoplasmic segment spans residues 739 to 863 (YKKDKRRHDV…HPHSHSTTRV (125 aa)). A disordered region spans residues 842–863 (GGQNNTLPHPHPHPHSHSTTRV). Residues 851-863 (PHPHPHSHSTTRV) show a composition bias toward basic residues.

This sequence belongs to the type-B carboxylesterase/lipase family. As to quaternary structure, interacts with neurexins NRXN1, NRXN2 and NRXN3. Interaction with neurexins is mediated by heparan sulfate glycan modification on neurexin. Interacts with NLGN3. Interacts with AIP1 and PDZRN3. Interacts (via its C-terminus) with DLG4/PSD-95 (via PDZ domain 3). Interacts with GOPC. Expressed in the blood vessel walls (at protein level). Highly expressed in brain through prenatal stages, and at lower levels in pancreas islet beta cells.

It localises to the cell membrane. It is found in the postsynaptic density. The protein resides in the synaptic cleft. Its subcellular location is the synaptic cell membrane. In terms of biological role, cell surface protein involved in cell-cell-interactions via its interactions with neurexin family members. Plays a role in synapse function and synaptic signal transmission, and probably mediates its effects by recruiting and clustering other synaptic proteins. May promote the initial formation of synapses, but is not essential for this. In vitro, triggers the de novo formation of presynaptic structures. May be involved in specification of excitatory synapses. Required to maintain wakefulness quality and normal synchrony of cerebral cortex activity during wakefulness and sleep. The protein is involved in nervous system development. This chain is Neuroligin-1 (NLGN1), found in Homo sapiens (Human).